A 157-amino-acid polypeptide reads, in one-letter code: uncharacterized protein (157 aa).

An N-acetyltransferase domain is found at 9–146 (LLINYKTLDE…GDFYVWHPET (138 aa)).

This is an uncharacterized protein from Bacillus cereus (strain ZK / E33L).